The sequence spans 257 residues: Imidazole glycerol phosphate synthase subunit HisF (257 aa).

Catalysis depends on residues D12 and D131.

This sequence belongs to the HisA/HisF family. As to quaternary structure, heterodimer of HisH and HisF.

The protein resides in the cytoplasm. The enzyme catalyses 5-[(5-phospho-1-deoxy-D-ribulos-1-ylimino)methylamino]-1-(5-phospho-beta-D-ribosyl)imidazole-4-carboxamide + L-glutamine = D-erythro-1-(imidazol-4-yl)glycerol 3-phosphate + 5-amino-1-(5-phospho-beta-D-ribosyl)imidazole-4-carboxamide + L-glutamate + H(+). The protein operates within amino-acid biosynthesis; L-histidine biosynthesis; L-histidine from 5-phospho-alpha-D-ribose 1-diphosphate: step 5/9. IGPS catalyzes the conversion of PRFAR and glutamine to IGP, AICAR and glutamate. The HisF subunit catalyzes the cyclization activity that produces IGP and AICAR from PRFAR using the ammonia provided by the HisH subunit. The protein is Imidazole glycerol phosphate synthase subunit HisF of Kineococcus radiotolerans (strain ATCC BAA-149 / DSM 14245 / SRS30216).